Here is a 365-residue protein sequence, read N- to C-terminus: Eukaryotic translation initiation factor 3 subunit H (365 aa).

Residues 11 to 160 (VKVEALVVMK…LRAFRLSPKF (150 aa)) enclose the MPN domain.

The protein belongs to the eIF-3 subunit H family. As to quaternary structure, component of the eukaryotic translation initiation factor 3 (eIF-3) complex.

It is found in the cytoplasm. In terms of biological role, component of the eukaryotic translation initiation factor 3 (eIF-3) complex, which is involved in protein synthesis of a specialized repertoire of mRNAs and, together with other initiation factors, stimulates binding of mRNA and methionyl-tRNAi to the 40S ribosome. The eIF-3 complex specifically targets and initiates translation of a subset of mRNAs involved in cell proliferation. This chain is Eukaryotic translation initiation factor 3 subunit H, found in Aspergillus niger (strain ATCC MYA-4892 / CBS 513.88 / FGSC A1513).